We begin with the raw amino-acid sequence, 405 residues long: Replication factor C large subunit (405 aa).

47 to 54 serves as a coordination point for ATP; sequence GPPGVGKT.

The protein belongs to the activator 1 small subunits family. RfcL subfamily. As to quaternary structure, heteromultimer composed of small subunits (RfcS) and large subunits (RfcL).

Part of the RFC clamp loader complex which loads the PCNA sliding clamp onto DNA. This Saccharolobus islandicus (strain M.16.27) (Sulfolobus islandicus) protein is Replication factor C large subunit.